The chain runs to 211 residues: Small ribosomal subunit protein eS8 (211 aa).

It belongs to the eukaryotic ribosomal protein eS8 family.

In Dictyostelium discoideum (Social amoeba), this protein is Small ribosomal subunit protein eS8 (rps8).